A 340-amino-acid chain; its full sequence is Agmatinase, mitochondrial (340 aa).

6 residues coordinate Mn(2+): His-150, Asp-173, His-175, Asp-177, Asp-264, and Asp-266.

Belongs to the arginase family. Agmatinase subfamily. Mn(2+) serves as cofactor.

The protein localises to the mitochondrion. It catalyses the reaction agmatine + H2O = urea + putrescine. The protein operates within amine and polyamine biosynthesis; putrescine biosynthesis via agmatine pathway; putrescine from agmatine: step 1/1. The protein is Agmatinase, mitochondrial (AGMAT) of Gallus gallus (Chicken).